We begin with the raw amino-acid sequence, 439 residues long: MNVSEVKSGATRSPKFVQLIFVDINGMPKGMEIPASRLQEAIEDGISFDGSSVPGFQGIEDSDLIFKADPDTYVEVPWDNVARVYGYIYKDGKPYGADPRGVLKRVIEKLAEMGIKAYIGPEPEFYLFKKNGSWELEIPDVGGYFDILTLDKAKDIKREIAEYMPSFGLVPEVLHHEVGKAQHEIDFRYDEALKTADNIISFKYIVKAVAEVHGLYATFMPKPIYGMPGNGMHLHISLWKEGENIFKGEEGLSETALHFIGGLLKHAKALTAITNPTVNSYKRLVPGYEAPVYISWGYKNRSALIRVPAFWGNGARIEYRCPDPSANPYFAFAAILMAGLDGIKHKVEPFAYVEENVYEMDEGKRKELGIDTLPGSLGEALDELEKDKVVREALGEAYKNFIEYKRKEWESYLEYLEAKHLPKDTKRVTEWELERYFFI.

In terms of domain architecture, GS beta-grasp spans 12 to 93 (RSPKFVQLIF…VYGYIYKDGK (82 aa)). A GS catalytic domain is found at 99-439 (PRGVLKRVIE…EWELERYFFI (341 aa)). The Mg(2+) site is built by E122 and E124. E172 contacts ATP. The Mg(2+) site is built by E177 and E184. Residue G229 coordinates L-glutamate. H233 is a binding site for Mg(2+). Residues 235–237 (HIS) and S237 contribute to the ATP site. Residues R283, E289, and R301 each contribute to the L-glutamate site. Residues R301 and R306 each contribute to the ATP site. E318 contributes to the Mg(2+) binding site. Residue R320 coordinates L-glutamate.

Belongs to the glutamine synthetase family. Oligomer of 12 subunits arranged in the form of two hexagons. It depends on Mg(2+) as a cofactor.

It is found in the cytoplasm. The catalysed reaction is L-glutamate + NH4(+) + ATP = L-glutamine + ADP + phosphate + H(+). Probably involved in nitrogen metabolism via ammonium assimilation. Catalyzes the ATP-dependent biosynthesis of glutamine from glutamate and ammonia. This is Glutamine synthetase from Pyrococcus abyssi (strain GE5 / Orsay).